Reading from the N-terminus, the 125-residue chain is Fluoride-specific ion channel FluC (125 aa).

Transmembrane regions (helical) follow at residues 2 to 22 (WLSILAIFCGAGLGALLRTGF), 35 to 55 (LGTLISNMVGGYLIGIALAFF), 68 to 88 (LIITGFLGGLTTFSSFSAEVV), and 98 to 118 (WALGTALLHLVGSLVLTLLGI). 2 residues coordinate Na(+): Gly75 and Thr78.

It belongs to the fluoride channel Fluc/FEX (TC 1.A.43) family.

Its subcellular location is the cell inner membrane. It catalyses the reaction fluoride(in) = fluoride(out). Its activity is regulated as follows. Na(+) is not transported, but it plays an essential structural role and its presence is essential for fluoride channel function. Fluoride-specific ion channel. Important for reducing fluoride concentration in the cell, thus reducing its toxicity. This is Fluoride-specific ion channel FluC from Polynucleobacter asymbioticus (strain DSM 18221 / CIP 109841 / QLW-P1DMWA-1) (Polynucleobacter necessarius subsp. asymbioticus).